The following is a 392-amino-acid chain: Tryptophan synthase beta chain (392 aa).

Position 84 is an N6-(pyridoxal phosphate)lysine (lysine 84).

Belongs to the TrpB family. As to quaternary structure, tetramer of two alpha and two beta chains. It depends on pyridoxal 5'-phosphate as a cofactor.

It catalyses the reaction (1S,2R)-1-C-(indol-3-yl)glycerol 3-phosphate + L-serine = D-glyceraldehyde 3-phosphate + L-tryptophan + H2O. The protein operates within amino-acid biosynthesis; L-tryptophan biosynthesis; L-tryptophan from chorismate: step 5/5. In terms of biological role, the beta subunit is responsible for the synthesis of L-tryptophan from indole and L-serine. The polypeptide is Tryptophan synthase beta chain (Campylobacter jejuni subsp. doylei (strain ATCC BAA-1458 / RM4099 / 269.97)).